Consider the following 913-residue polypeptide: Protein ECT2 (913 aa).

Residue Ala-2 is modified to N-acetylalanine. BRCT domains lie at 176–260 (MLNL…AAVD) and 266–354 (FKVP…MYLY). Thr-359 is modified (phosphothreonine; by PKC/PRKCI). Phosphoserine occurs at positions 367 and 370. Position 373 is a phosphothreonine (Thr-373). Ser-376 is subject to Phosphoserine. 2 short sequence motifs (nuclear localization signal) span residues 378–382 (RKRRR) and 401–405 (PRKRP). Disordered regions lie at residues 389–415 (QLSRETDLSPFPPRKRPSAEHSLSIGS) and 427–450 (IHYGETPKSCAKSSRSSTPVPPKQ). Thr-444 carries the phosphothreonine; by CDK1 modification. Positions 452–641 (ARWQVAKELY…KEVMTHINED (190 aa)) constitute a DH domain. Lys-611 is covalently cross-linked (Glycyl lysine isopeptide (Lys-Gly) (interchain with G-Cter in SUMO2)). A PH domain is found at 675–794 (RVETVSLGEH…KMLCRHVANT (120 aa)). Phosphoserine is present on residues Ser-716 and Ser-842. A Phosphothreonine; by CDK1 modification is found at Thr-846. The segment at 853–874 (MALSSSHSSEGRSPPSSGKLAV) is disordered. A compositionally biased stretch (low complexity) spans 856 to 870 (SSSHSSEGRSPPSSG). A phosphoserine mark is found at Ser-861 and Ser-865.

As to quaternary structure, homodimer. Homooligomer. Found in the centralspindlin complex. Interacts with NR1I3. Interacts (Thr-359 phosphorylated form) with PARD6A; the interaction is observed in cancer cells. Interacts (Thr-359 phosphorylated form) with PRKCI; the interaction is observed in cancer cells. Interacts with PKP4; the interaction is observed at the midbody. Interacts with RACGAP1; the interaction is direct, occurs in a microtubule-dependent manner, occurs at anaphase and during cytokinesis, is inhibited in metaphase by phosphorylation of ECT2 on Thr-373 and is stimulated in early anaphase by dephosphorylation of ECT2 probably on Thr-373 through CDK1 activity. Interacts with PLK1; the interaction is stimulated upon its phosphorylation on Thr-444. Interacts with RHOA; the interaction results in allosteric activation of ECT2. Interacts with KIF23, PARD3, PARD6B and PRKCQ. Interacts with NEDD9/HEF1. In terms of processing, phosphorylated by PLK1 in vitro. Hyperphosphorylated during the G2 phase of the cell cycle. Phosphorylation at Thr-373 occurs during the G2/M phase, relieves its auto-inhibition status and stimulates its GEF activity. Phosphorylation at Thr-444 in G2/M phase is required for subsequent binding with PLK1 and Rho exchange activation. Dephosphorylated at the time of cytokinesis. Phosphorylation at Thr-359 is required for its transformation activity in cancer cells. Highest expression in testis. Also detectable in brain, kidney, liver and spleen.

The protein localises to the nucleus. The protein resides in the cytoplasm. It is found in the cytoskeleton. It localises to the spindle. Its subcellular location is the cleavage furrow. The protein localises to the midbody. The protein resides in the cell junction. It is found in the tight junction. With respect to regulation, autoinhibited by the C-terminal PH domain which folds back and binds to the surface of the DH domain, blocking binding of RHOA to the catalytic center of the DH domain. The 2nd BRCT domain is also involved in inhibition, probably by helping to impede RHOA binding. Allosterically activated by binding of activated GTP-bound RHOA to the PH domain which stimulates the release of PH inhibition and promotes the binding of substrate RHOA to the catalytic center. Binding of phosphorylated RACGAP1 to the N-terminal BRCT domain-containing region also releases autoinhibition. Its function is as follows. Guanine nucleotide exchange factor (GEF) that catalyzes the exchange of GDP for GTP. Promotes guanine nucleotide exchange on the Rho family members of small GTPases, like RHOA, RHOC, RAC1 and CDC42. Required for signal transduction pathways involved in the regulation of cytokinesis. Component of the centralspindlin complex that serves as a microtubule-dependent and Rho-mediated signaling required for the myosin contractile ring formation during the cell cycle cytokinesis. Regulates the translocation of RHOA from the central spindle to the equatorial region. Plays a role in the control of mitotic spindle assembly; regulates the activation of CDC42 in metaphase for the process of spindle fibers attachment to kinetochores before chromosome congression. Involved in the regulation of epithelial cell polarity; participates in the formation of epithelial tight junctions in a polarity complex PARD3-PARD6-protein kinase PRKCQ-dependent manner. Plays a role in the regulation of neurite outgrowth. Inhibits phenobarbital (PB)-induced NR1I3 nuclear translocation. Stimulates the activity of RAC1 through its association with the oncogenic PARD6A-PRKCI complex in cancer cells, thereby acting to coordinately drive tumor cell proliferation and invasion. Also stimulates genotoxic stress-induced RHOB activity in breast cancer cells leading to their cell death. This chain is Protein ECT2 (Ect2), found in Mus musculus (Mouse).